Reading from the N-terminus, the 717-residue chain is Cleavage stimulation factor subunit 3 (717 aa).

Residue Ser2 is modified to N-acetylserine. HAT repeat units follow at residues 45-77 (QPID…AEIK), 79-110 (KNYD…YVRE), 117-152 (SYKE…FLKG), 163-196 (QRIT…YEEG), 221-261 (KEYE…WEKS), 271-303 (LITK…YLEQ), 319-352 (LFSD…YEES), 354-387 (MKYE…FARR), and 458-494 (NEDN…FESN). Residues 683-704 (AVKRPNEDSDEDEEKGAVVPPV) are disordered. A Phosphoserine modification is found at Ser691.

In terms of assembly, homodimer. The CSTF complex is composed of CSTF1 (50 kDa subunit), CSTF2 (64 kDa subunit) and CSTF3 (77 kDa subunit). CSTF3 directly interacts with CSTF1 and CSTF2. Interacts with FIP1L1.

It is found in the nucleus. Functionally, one of the multiple factors required for polyadenylation and 3'-end cleavage of mammalian pre-mRNAs. The polypeptide is Cleavage stimulation factor subunit 3 (Cstf3) (Mus musculus (Mouse)).